Here is an 80-residue protein sequence, read N- to C-terminus: LTMMARKMKETDSEEEIREAFRVFDKDGNGFISAAELRHVMTNLGEKLTDEEVDEMIREADIDGDGQVNYEEFVAMMTSK.

EF-hand domains are found at residues Asp-12–Lys-47 and Leu-48–Lys-80. Ca(2+) contacts are provided by Asp-25, Asp-27, Asn-29, Glu-36, Asp-61, Asp-63, Asp-65, Gln-67, and Glu-72.

Belongs to the calmodulin family.

Its function is as follows. Calmodulin mediates the control of a large number of enzymes, ion channels and other proteins by Ca(2+). Among the enzymes to be stimulated by the calmodulin-Ca(2+) complex are a number of protein kinases and phosphatases. The chain is Calmodulin from Strongylocentrotus purpuratus (Purple sea urchin).